The primary structure comprises 168 residues: Large ribosomal subunit protein uL16 (168 aa).

This sequence belongs to the universal ribosomal protein uL16 family.

The polypeptide is Large ribosomal subunit protein uL16 (Thermofilum pendens (strain DSM 2475 / Hrk 5)).